The sequence spans 305 residues: Serine/threonine-protein phosphatase PP2A catalytic subunit (305 aa).

Mn(2+) contacts are provided by Asp53, His55, Asp81, and Asn113. His114 functions as the Proton donor in the catalytic mechanism. Residues His163 and His237 each contribute to the Mn(2+) site.

Belongs to the PPP phosphatase family. PP-2A subfamily. Mn(2+) is required as a cofactor.

The catalysed reaction is O-phospho-L-seryl-[protein] + H2O = L-seryl-[protein] + phosphate. It carries out the reaction O-phospho-L-threonyl-[protein] + H2O = L-threonyl-[protein] + phosphate. This Helianthus annuus (Common sunflower) protein is Serine/threonine-protein phosphatase PP2A catalytic subunit.